We begin with the raw amino-acid sequence, 451 residues long: Glycine--tRNA ligase (451 aa).

Positions 99 and 168 each coordinate substrate. ATP-binding positions include 200–202, 210–215, 284–285, and 328–331; these read RNE, FRTREF, EL, and GLDR. 215–219 provides a ligand contact to substrate; that stretch reads FEQME. 324 to 328 is a substrate binding site; the sequence is EPSVG.

This sequence belongs to the class-II aminoacyl-tRNA synthetase family. Homodimer.

The protein localises to the cytoplasm. It carries out the reaction tRNA(Gly) + glycine + ATP = glycyl-tRNA(Gly) + AMP + diphosphate. Catalyzes the attachment of glycine to tRNA(Gly). The polypeptide is Glycine--tRNA ligase (Mycoplasmopsis synoviae (strain 53) (Mycoplasma synoviae)).